A 101-amino-acid chain; its full sequence is NAD(P)H-quinone oxidoreductase subunit 4L, chloroplastic (101 aa).

The next 3 membrane-spanning stretches (helical) occupy residues 2–22 (ILEH…YGLI), 32–52 (MCLE…SDFF), and 61–81 (IFCI…LAIV).

The protein belongs to the complex I subunit 4L family. As to quaternary structure, NDH is composed of at least 16 different subunits, 5 of which are encoded in the nucleus.

The protein localises to the plastid. Its subcellular location is the chloroplast thylakoid membrane. It catalyses the reaction a plastoquinone + NADH + (n+1) H(+)(in) = a plastoquinol + NAD(+) + n H(+)(out). The catalysed reaction is a plastoquinone + NADPH + (n+1) H(+)(in) = a plastoquinol + NADP(+) + n H(+)(out). NDH shuttles electrons from NAD(P)H:plastoquinone, via FMN and iron-sulfur (Fe-S) centers, to quinones in the photosynthetic chain and possibly in a chloroplast respiratory chain. The immediate electron acceptor for the enzyme in this species is believed to be plastoquinone. Couples the redox reaction to proton translocation, and thus conserves the redox energy in a proton gradient. This is NAD(P)H-quinone oxidoreductase subunit 4L, chloroplastic from Aethionema cordifolium (Lebanon stonecress).